The primary structure comprises 522 residues: Putative E3 ubiquitin-protein ligase RING1a (522 aa).

Residues 1-10 are compositionally biased toward polar residues; it reads MSVKNNSFSS. Residues 1–119 form a disordered region; the sequence is MSVKNNSFSS…RSPSSISGDQ (119 aa). A compositionally biased stretch (basic and acidic residues) spans 32 to 64; it reads LQEKDETKEEKEGDEEVKHDEAEEDQEVVKPND. Residues 65–106 are compositionally biased toward acidic residues; that stretch reads AEEDDDGDDAEEDEEEEVEAEEDEEAEEEEEEEEEEEEEEED. Residues 136-176 form an RING-type zinc finger; it reads CPICLGIIKKTRTVMECLHRFCRECIDKSMRLGNNECPACR. 2 disordered regions span residues 250–347 and 363–385; these read VLMR…DTKG and RGGT…KSVR. The segment covering 287–306 has biased composition (basic and acidic residues); the sequence is NNNRGRDKDSSSDERGTEVR. The span at 316–325 shows a compositional bias: low complexity; it reads SRSTQHPSSS. Composition is skewed to polar residues over residues 326–336 and 366–384; these read GANKNNGNCAD and TRSN…SKSV.

Homodimer or heterodimer with RING1B. Interacts with CLF. Component of the PRC1-like complex, at least composed of RING1A, RING1B and LHP1.

It localises to the nucleus. The catalysed reaction is S-ubiquitinyl-[E2 ubiquitin-conjugating enzyme]-L-cysteine + [acceptor protein]-L-lysine = [E2 ubiquitin-conjugating enzyme]-L-cysteine + N(6)-ubiquitinyl-[acceptor protein]-L-lysine.. It participates in protein modification; protein ubiquitination. In terms of biological role, putative E3 ubiquitin-protein ligase that mediates monoubiquitination of 'Lys-119' of histone H2A (H2AK119ub), thereby playing a central role in histone code and gene regulation. Its function is as follows. As part of the PRC1-like complex, repress class I KNOX gene expression. PcG PRC1 complex maintains the transcriptionally repressive state of many genes, including Hox genes, throughout development. PcG PRC1 complex acts via chromatin remodeling and modification of histones, rendering chromatin heritably changed in its expressibility. This Arabidopsis thaliana (Mouse-ear cress) protein is Putative E3 ubiquitin-protein ligase RING1a (RING1A).